Here is a 360-residue protein sequence, read N- to C-terminus: Membrane-bound lytic murein transglycosylase C (360 aa).

The signal sequence occupies residues methionine 1–serine 16. Residue cysteine 17 is the site of N-palmitoyl cysteine attachment. Cysteine 17 is lipidated: S-diacylglycerol cysteine.

The protein belongs to the transglycosylase Slt family.

The protein resides in the cell outer membrane. It catalyses the reaction Exolytic cleavage of the (1-&gt;4)-beta-glycosidic linkage between N-acetylmuramic acid (MurNAc) and N-acetylglucosamine (GlcNAc) residues in peptidoglycan, from either the reducing or the non-reducing ends of the peptidoglycan chains, with concomitant formation of a 1,6-anhydrobond in the MurNAc residue.. Murein-degrading enzyme. May play a role in recycling of muropeptides during cell elongation and/or cell division. The polypeptide is Membrane-bound lytic murein transglycosylase C (Cronobacter sakazakii (strain ATCC BAA-894) (Enterobacter sakazakii)).